The primary structure comprises 225 residues: NAD(P)H-quinone oxidoreductase subunit K, chloroplastic (225 aa).

[4Fe-4S] cluster is bound by residues Cys-43, Cys-44, Cys-108, and Cys-139.

This sequence belongs to the complex I 20 kDa subunit family. In terms of assembly, NDH is composed of at least 16 different subunits, 5 of which are encoded in the nucleus. [4Fe-4S] cluster serves as cofactor.

It localises to the plastid. Its subcellular location is the chloroplast thylakoid membrane. The catalysed reaction is a plastoquinone + NADH + (n+1) H(+)(in) = a plastoquinol + NAD(+) + n H(+)(out). It catalyses the reaction a plastoquinone + NADPH + (n+1) H(+)(in) = a plastoquinol + NADP(+) + n H(+)(out). Functionally, NDH shuttles electrons from NAD(P)H:plastoquinone, via FMN and iron-sulfur (Fe-S) centers, to quinones in the photosynthetic chain and possibly in a chloroplast respiratory chain. The immediate electron acceptor for the enzyme in this species is believed to be plastoquinone. Couples the redox reaction to proton translocation, and thus conserves the redox energy in a proton gradient. The polypeptide is NAD(P)H-quinone oxidoreductase subunit K, chloroplastic (Helianthus annuus (Common sunflower)).